The chain runs to 288 residues: Thymidylate synthase (288 aa).

Residues R21 and 150–151 contribute to the dUMP site; that span reads RR. C170 (nucleophile) is an active-site residue. DUMP contacts are provided by residues 190 to 193, N201, and 231 to 233; these read RSGD and HIY. D193 provides a ligand contact to (6R)-5,10-methylene-5,6,7,8-tetrahydrofolate. (6R)-5,10-methylene-5,6,7,8-tetrahydrofolate is bound at residue A287.

This sequence belongs to the thymidylate synthase family. Bacterial-type ThyA subfamily. In terms of assembly, homodimer.

The protein localises to the cytoplasm. The catalysed reaction is dUMP + (6R)-5,10-methylene-5,6,7,8-tetrahydrofolate = 7,8-dihydrofolate + dTMP. It functions in the pathway pyrimidine metabolism; dTTP biosynthesis. Its function is as follows. Catalyzes the reductive methylation of 2'-deoxyuridine-5'-monophosphate (dUMP) to 2'-deoxythymidine-5'-monophosphate (dTMP) while utilizing 5,10-methylenetetrahydrofolate (mTHF) as the methyl donor and reductant in the reaction, yielding dihydrofolate (DHF) as a by-product. This enzymatic reaction provides an intracellular de novo source of dTMP, an essential precursor for DNA biosynthesis. In Acholeplasma laidlawii (strain PG-8A), this protein is Thymidylate synthase.